The chain runs to 318 residues: Methionyl-tRNA formyltransferase (318 aa).

Residue 112-115 (SILP) participates in (6S)-5,6,7,8-tetrahydrofolate binding.

This sequence belongs to the Fmt family.

The enzyme catalyses L-methionyl-tRNA(fMet) + (6R)-10-formyltetrahydrofolate = N-formyl-L-methionyl-tRNA(fMet) + (6S)-5,6,7,8-tetrahydrofolate + H(+). Functionally, attaches a formyl group to the free amino group of methionyl-tRNA(fMet). The formyl group appears to play a dual role in the initiator identity of N-formylmethionyl-tRNA by promoting its recognition by IF2 and preventing the misappropriation of this tRNA by the elongation apparatus. The sequence is that of Methionyl-tRNA formyltransferase from Haemophilus influenzae (strain ATCC 51907 / DSM 11121 / KW20 / Rd).